We begin with the raw amino-acid sequence, 113 residues long: Urocortin-2 (113 aa).

The N-terminal stretch at 1 to 23 (MMTRWALVVFVVLMLDRILFVPG) is a signal peptide. A propeptide spanning residues 24–71 (TPIPTFQLLPQNSLETTPSSVTSESSSGTTTGPSASWSNSKASPYLDT) is cleaved from the precursor. Low complexity predominate over residues 37–61 (LETTPSSVTSESSSGTTTGPSASWS). The disordered stretch occupies residues 37 to 64 (LETTPSSVTSESSSGTTTGPSASWSNSK). Position 110 is a valine amide; partial (V110).

It belongs to the sauvagine/corticotropin-releasing factor/urotensin I family. As to quaternary structure, binds with high affinity to CRF receptors 2-alpha and 2-beta. In terms of processing, glycosylated.

Its subcellular location is the secreted. Functionally, suppresses food intake, delays gastric emptying and decreases heat-induced edema. Might represent an endogenous ligand for maintaining homeostasis after stress. This Mus musculus (Mouse) protein is Urocortin-2 (Ucn2).